The following is a 314-amino-acid chain: Methionyl-tRNA formyltransferase (314 aa).

A (6S)-5,6,7,8-tetrahydrofolate-binding site is contributed by 110-113; the sequence is SLLP.

It belongs to the Fmt family.

The catalysed reaction is L-methionyl-tRNA(fMet) + (6R)-10-formyltetrahydrofolate = N-formyl-L-methionyl-tRNA(fMet) + (6S)-5,6,7,8-tetrahydrofolate + H(+). Its function is as follows. Attaches a formyl group to the free amino group of methionyl-tRNA(fMet). The formyl group appears to play a dual role in the initiator identity of N-formylmethionyl-tRNA by promoting its recognition by IF2 and preventing the misappropriation of this tRNA by the elongation apparatus. In Levilactobacillus brevis (strain ATCC 367 / BCRC 12310 / CIP 105137 / JCM 1170 / LMG 11437 / NCIMB 947 / NCTC 947) (Lactobacillus brevis), this protein is Methionyl-tRNA formyltransferase.